Consider the following 352-residue polypeptide: Trifunctional sesterterpene/triterpene/sesquarterpene synthase (352 aa).

This sequence belongs to the large terpene synthase family.

The catalysed reaction is (2E,6E,10E,14E)-geranylfarnesyl diphosphate = beta-geranylfarnesene + diphosphate. It catalyses the reaction all-trans-hexaprenyl diphosphate = beta-hexaprene + diphosphate. The enzyme catalyses all-trans-heptaprenyl diphosphate = beta-heptaprene + diphosphate. In terms of biological role, catalyzes the conversion of geranylfarnesyl diphosphate (GFPP) and hexaprenyl diphosphate (HexPP) into beta-geranylfarnesene and beta-hexaprene, respectively. Also produces beta-heptaprene from heptaprenyl diphosphate (HepPP) as a minor product. This chain is Trifunctional sesterterpene/triterpene/sesquarterpene synthase, found in Shouchella clausii (Alkalihalobacillus clausii).